Here is a 276-residue protein sequence, read N- to C-terminus: tRNA (guanine-N(7)-)-methyltransferase (276 aa).

The interval 1–23 (MRPDPAPLDPTDASPAQARRHQP) is disordered. S-adenosyl-L-methionine contacts are provided by Glu-103, Glu-128, Asp-155, and Asp-178. The active site involves Asp-178. Residues Lys-182, Asp-214, and 252 to 255 (TRYE) each bind substrate.

The protein belongs to the class I-like SAM-binding methyltransferase superfamily. TrmB family.

It carries out the reaction guanosine(46) in tRNA + S-adenosyl-L-methionine = N(7)-methylguanosine(46) in tRNA + S-adenosyl-L-homocysteine. It functions in the pathway tRNA modification; N(7)-methylguanine-tRNA biosynthesis. Functionally, catalyzes the formation of N(7)-methylguanine at position 46 (m7G46) in tRNA. The sequence is that of tRNA (guanine-N(7)-)-methyltransferase from Cutibacterium acnes (strain DSM 16379 / KPA171202) (Propionibacterium acnes).